We begin with the raw amino-acid sequence, 124 residues long: Late histone H2A.2.1 (124 aa).

The span at 1 to 18 (MSGRGKGAKAKSKAKSRS) shows a compositional bias: basic residues. The disordered stretch occupies residues 1 to 21 (MSGRGKGAKAKSKAKSRSSRA). Ser2 is modified (N-acetylserine). The residue at position 2 (Ser2) is a Phosphoserine. Gln104 bears the N5-methylglutamine mark. A Glycyl lysine isopeptide (Lys-Gly) (interchain with G-Cter in ubiquitin) cross-link involves residue Lys119.

The protein belongs to the histone H2A family. In terms of assembly, the nucleosome is a histone octamer containing two molecules each of H2A, H2B, H3 and H4 assembled in one H3-H4 heterotetramer and two H2A-H2B heterodimers. The octamer wraps approximately 147 bp of DNA. Post-translationally, monoubiquitination of Lys-119 gives a specific tag for epigenetic transcriptional repression. Phosphorylation of Ser-2 directly represses transcription.

It localises to the nucleus. The protein localises to the chromosome. Core component of nucleosome. Nucleosomes wrap and compact DNA into chromatin, limiting DNA accessibility to the cellular machineries which require DNA as a template. Histones thereby play a central role in transcription regulation, DNA repair, DNA replication and chromosomal stability. DNA accessibility is regulated via a complex set of post-translational modifications of histones, also called histone code, and nucleosome remodeling. The chain is Late histone H2A.2.1 from Psammechinus miliaris (Green sea urchin).